A 343-amino-acid polypeptide reads, in one-letter code: UPF0324 membrane protein LJ_1117 (343 aa).

Transmembrane regions (helical) follow at residues 10–27 (FGLAAVMTLICSVAGIFL), 32–54 (YVNLIGALVIALLLGISLQVLPV), 64–86 (IGFISNKFLRLGIILLGFRLNLT), 91–113 (AGIKTILVAMLGVSGTIVLTYWL), 123–145 (LAVLSACGCGICGAAAVMGVSPQ), 157–179 (NEVLAVAVVCVMGTVFTLLEIVI), 219–241 (ALIMKLSRVLLLAPVALIIGYWY), 262–284 (IPWFLGGFILTSILGTFLPFPPV), 288–310 (GLVQAAYVFLGMAMAALGISVNF), and 317–339 (GGTVFGAAAISSTCLMIFMIIMS).

Belongs to the UPF0324 family.

The protein localises to the cell membrane. This is UPF0324 membrane protein LJ_1117 from Lactobacillus johnsonii (strain CNCM I-12250 / La1 / NCC 533).